Consider the following 236-residue polypeptide: Small ribosomal subunit protein uS3 (236 aa).

The KH type-2 domain maps to I39 to R107. Positions A214 to A236 are disordered.

This sequence belongs to the universal ribosomal protein uS3 family. Part of the 30S ribosomal subunit. Forms a tight complex with proteins S10 and S14.

Binds the lower part of the 30S subunit head. Binds mRNA in the 70S ribosome, positioning it for translation. The polypeptide is Small ribosomal subunit protein uS3 (Bartonella tribocorum (strain CIP 105476 / IBS 506)).